Consider the following 652-residue polypeptide: Leucine aminopeptidase 2 (652 aa).

Residues Gln165–Glu167 and Pro293–Glu298 each bind a peptide. His322 is a binding site for Zn(2+). The Proton acceptor role is filled by Glu323. His326 and Glu345 together coordinate Zn(2+). The active-site Proton donor is Tyr411.

Belongs to the peptidase M1 family. Requires Zn(2+) as cofactor.

It localises to the cytoplasm. It is found in the nucleus. The catalysed reaction is an epoxide + H2O = an ethanediol. Functionally, aminopeptidase that preferentially cleaves di- and tripeptides. Also has low epoxide hydrolase activity (in vitro). Can hydrolyze the epoxide leukotriene LTA(4) but it forms preferentially 5,6-dihydroxy-7,9,11,14-eicosatetraenoic acid rather than the cytokine leukotriene B(4) as the product compared to the homologous mammalian enzyme (in vitro). In Candida glabrata (strain ATCC 2001 / BCRC 20586 / JCM 3761 / NBRC 0622 / NRRL Y-65 / CBS 138) (Yeast), this protein is Leucine aminopeptidase 2.